We begin with the raw amino-acid sequence, 167 residues long: uncharacterized protein (167 aa).

The segment at 140–167 (SSEEKKKKKKKKKEKSLHTEREKKKKKF) is disordered. Over residues 145–154 (KKKKKKKKEK) the composition is skewed to basic residues.

This is an uncharacterized protein from Saccharomyces cerevisiae (strain ATCC 204508 / S288c) (Baker's yeast).